A 342-amino-acid polypeptide reads, in one-letter code: Dihydroorotase (342 aa).

Zn(2+)-binding residues include histidine 13 and histidine 15. Substrate-binding positions include 15–17 (HLR) and asparagine 41. Zn(2+) contacts are provided by lysine 99, histidine 136, and histidine 174. Lysine 99 is modified (N6-carboxylysine). Histidine 136 provides a ligand contact to substrate. Substrate is bound at residue leucine 218. Zn(2+) is bound at residue aspartate 246. Aspartate 246 is an active-site residue. Residues histidine 250 and alanine 262 each contribute to the substrate site.

It belongs to the metallo-dependent hydrolases superfamily. DHOase family. Class II DHOase subfamily. Homodimer. The cofactor is Zn(2+).

It catalyses the reaction (S)-dihydroorotate + H2O = N-carbamoyl-L-aspartate + H(+). It functions in the pathway pyrimidine metabolism; UMP biosynthesis via de novo pathway; (S)-dihydroorotate from bicarbonate: step 3/3. In terms of biological role, catalyzes the reversible cyclization of carbamoyl aspartate to dihydroorotate. The protein is Dihydroorotase of Synechocystis sp. (strain ATCC 27184 / PCC 6803 / Kazusa).